Here is a 141-residue protein sequence, read N- to C-terminus: ATP synthase epsilon chain, chloroplastic (141 aa).

Belongs to the ATPase epsilon chain family. In terms of assembly, F-type ATPases have 2 components, F(1) - the catalytic core - and F(0) - the membrane proton channel. F(1) has five subunits: alpha(3), beta(3), gamma(1), delta(1), epsilon(1). F(0) has four main subunits: a(1), b(1), b'(1) and c(10-14). The alpha and beta chains form an alternating ring which encloses part of the gamma chain. F(1) is attached to F(0) by a central stalk formed by the gamma and epsilon chains, while a peripheral stalk is formed by the delta, b and b' chains.

It is found in the plastid. It localises to the chloroplast thylakoid membrane. F(1)F(0) ATP synthase produces ATP from ADP in the presence of a proton or sodium gradient. F-type ATPases consist of two structural domains, F(1) containing the extramembraneous catalytic core and F(0) containing the membrane proton channel, linked together by a central stalk and a peripheral stalk. During catalysis, ATP synthesis in the catalytic domain of F(1) is coupled via a rotary mechanism of the central stalk subunits to proton translocation. The sequence is that of ATP synthase epsilon chain, chloroplastic from Chlamydomonas reinhardtii (Chlamydomonas smithii).